The chain runs to 341 residues: Putative UPF0607 protein ENSP00000381514 (341 aa).

Over residues 78-89 the composition is skewed to basic and acidic residues; sequence AEEPKEATEVKD. 2 disordered regions span residues 78-131 and 216-282; these read AEEP…NPRP and GLLT…KLPC. The segment covering 108–127 has biased composition (polar residues); that stretch reads EAASTSRPLETQGNLTSSWY. Positions 243–252 are enriched in basic residues; the sequence is AGHRSRKRKL.

It belongs to the UPF0607 family.

In Homo sapiens (Human), this protein is Putative UPF0607 protein ENSP00000381514.